Here is a 645-residue protein sequence, read N- to C-terminus: 1,4-alpha-glucan branching enzyme GlgB (645 aa).

Residue aspartate 309 is the Nucleophile of the active site. The active-site Proton donor is glutamate 352. The tract at residues 619–645 is disordered; it reads VKTRKGSKKQDGSKTKVRSNVTSRGKR. The segment covering 636–645 has biased composition (polar residues); sequence RSNVTSRGKR.

The protein belongs to the glycosyl hydrolase 13 family. GlgB subfamily. As to quaternary structure, monomer.

The enzyme catalyses Transfers a segment of a (1-&gt;4)-alpha-D-glucan chain to a primary hydroxy group in a similar glucan chain.. Its pathway is glycan biosynthesis; glycogen biosynthesis. Its function is as follows. Catalyzes the formation of the alpha-1,6-glucosidic linkages in glycogen by scission of a 1,4-alpha-linked oligosaccharide from growing alpha-1,4-glucan chains and the subsequent attachment of the oligosaccharide to the alpha-1,6 position. This is 1,4-alpha-glucan branching enzyme GlgB from Bacillus cereus (strain ATCC 10987 / NRS 248).